Reading from the N-terminus, the 283-residue chain is Daunorubicin resistance ABC transporter permease protein DrrB1 (283 aa).

In terms of domain architecture, ABC transmembrane type-2 spans 53–280 (VQLIDIVLMP…PLTMRLYRNK (228 aa)). Helical transmembrane passes span 58 to 78 (IVLM…GAFA), 85 to 105 (LQFY…VYTG), 150 to 170 (VFLG…VVGA), 171 to 191 (MLVL…LGVV), 198 to 218 (VSGT…IFVM), and 252 to 272 (FWDV…FAPL).

This sequence belongs to the ABC-2 integral membrane protein family. In terms of assembly, the complex is probably composed of two ATP-binding proteins (DrrA1) and two transmembrane proteins (DrrB1).

The protein localises to the cell membrane. Its function is as follows. Part of the ABC transporter complex DrrA1B1 involved in daunorubicin efflux. Responsible for the translocation of the substrate across the membrane. Confers self-resistance to daunorubicin, an antibiotic produced by S.coeruleorubidus. In Streptomyces coeruleorubidus, this protein is Daunorubicin resistance ABC transporter permease protein DrrB1.